A 778-amino-acid chain; its full sequence is Endonuclease MutS2 (778 aa).

Position 328 to 335 (328 to 335 (GPNTGGKT)) interacts with ATP. The Smr domain maps to 702–777 (LDLRGKRYEE…GSGATIVTFK (76 aa)).

It belongs to the DNA mismatch repair MutS family. MutS2 subfamily. In terms of assembly, homodimer. Binds to stalled ribosomes, contacting rRNA.

Its function is as follows. Endonuclease that is involved in the suppression of homologous recombination and thus may have a key role in the control of bacterial genetic diversity. Functionally, acts as a ribosome collision sensor, splitting the ribosome into its 2 subunits. Detects stalled/collided 70S ribosomes which it binds and splits by an ATP-hydrolysis driven conformational change. Acts upstream of the ribosome quality control system (RQC), a ribosome-associated complex that mediates the extraction of incompletely synthesized nascent chains from stalled ribosomes and their subsequent degradation. Probably generates substrates for RQC. In Streptococcus pneumoniae serotype 2 (strain D39 / NCTC 7466), this protein is Endonuclease MutS2.